The following is a 433-amino-acid chain: Trigger factor (433 aa).

The 86-residue stretch at 163 to 248 folds into the PPIase FKBP-type domain; the sequence is GDTVNIDFSG…VNEIKFKDVP (86 aa).

Belongs to the FKBP-type PPIase family. Tig subfamily.

It is found in the cytoplasm. It catalyses the reaction [protein]-peptidylproline (omega=180) = [protein]-peptidylproline (omega=0). Involved in protein export. Acts as a chaperone by maintaining the newly synthesized protein in an open conformation. Functions as a peptidyl-prolyl cis-trans isomerase. This Staphylococcus epidermidis (strain ATCC 35984 / DSM 28319 / BCRC 17069 / CCUG 31568 / BM 3577 / RP62A) protein is Trigger factor.